A 164-amino-acid chain; its full sequence is MAFKDNAVELEERVVAINRVTKVVKGGRRLRFAALVVVGDGNGRVGFGTGKAQEVPEAIRKAVEAAKKNMIEVPMVGTTIPHEVYTNFGGAKVLLKPAVEGSGVAAGGAVRAVIELAGVADITSKSLGSNTPINIVRATVEGLKQLKRAEEVAALRGISVSDLA.

Positions 10-73 constitute an S5 DRBM domain; it reads LEERVVAINR…EAAKKNMIEV (64 aa).

The protein belongs to the universal ribosomal protein uS5 family. As to quaternary structure, part of the 30S ribosomal subunit. Contacts proteins S4 and S8.

In terms of biological role, with S4 and S12 plays an important role in translational accuracy. Functionally, located at the back of the 30S subunit body where it stabilizes the conformation of the head with respect to the body. In Streptococcus pyogenes serotype M1, this protein is Small ribosomal subunit protein uS5.